We begin with the raw amino-acid sequence, 194 residues long: Adenylate kinase isoenzyme 1 (194 aa).

An N-acetylmethionine modification is found at M1. 18 to 23 (GSGKGT) is a binding site for ATP. S38 is modified (phosphoserine). The segment at 38–67 (STGDLLRAEVSSGSARGKKLSEIMEKGQLV) is NMP. Residues T39, R44, 65–67 (QLV), 94–97 (GYPR), and Q101 each bind AMP. An LID region spans residues 131 to 141 (KRGETSGRVDD). Position 132 (R132) interacts with ATP. AMP contacts are provided by R138 and R149. G177 serves as a coordination point for ATP.

Belongs to the adenylate kinase family. AK1 subfamily. Monomer. Mg(2+) serves as cofactor.

It localises to the cytoplasm. The enzyme catalyses a ribonucleoside 5'-phosphate + ATP = a ribonucleoside 5'-diphosphate + ADP. It carries out the reaction AMP + ATP = 2 ADP. The catalysed reaction is dAMP + ATP = dADP + ADP. It catalyses the reaction dATP + AMP = dADP + ADP. The enzyme catalyses dAMP + dATP = 2 dADP. It carries out the reaction a 2'-deoxyribonucleoside 5'-diphosphate + ATP = a 2'-deoxyribonucleoside 5'-triphosphate + ADP. The catalysed reaction is a ribonucleoside 5'-diphosphate + ATP = a ribonucleoside 5'-triphosphate + ADP. It catalyses the reaction CDP + GTP = CTP + GDP. The enzyme catalyses GDP + ATP = GTP + ADP. It carries out the reaction UDP + ATP = UTP + ADP. The catalysed reaction is GTP + UDP = UTP + GDP. It catalyses the reaction dTDP + GTP = dTTP + GDP. The enzyme catalyses dCDP + GTP = dCTP + GDP. It carries out the reaction dGDP + ATP = dGTP + ADP. The catalysed reaction is dADP + GTP = dATP + GDP. It catalyses the reaction thiamine diphosphate + ADP = thiamine triphosphate + AMP. Functionally, catalyzes the reversible transfer of the terminal phosphate group between ATP and AMP. Also displays broad nucleoside diphosphate kinase activity. Plays an important role in cellular energy homeostasis and in adenine nucleotide metabolism. Also catalyzes at a very low rate the synthesis of thiamine triphosphate (ThTP) from thiamine diphosphate (ThDP) and ADP. This chain is Adenylate kinase isoenzyme 1, found in Oryctolagus cuniculus (Rabbit).